A 309-amino-acid polypeptide reads, in one-letter code: Homoserine kinase (309 aa).

91 to 101 (PIGSGLGSSAC) contacts ATP.

This sequence belongs to the GHMP kinase family. Homoserine kinase subfamily.

The protein localises to the cytoplasm. The catalysed reaction is L-homoserine + ATP = O-phospho-L-homoserine + ADP + H(+). Its pathway is amino-acid biosynthesis; L-threonine biosynthesis; L-threonine from L-aspartate: step 4/5. Catalyzes the ATP-dependent phosphorylation of L-homoserine to L-homoserine phosphate. This chain is Homoserine kinase, found in Citrobacter koseri (strain ATCC BAA-895 / CDC 4225-83 / SGSC4696).